The following is a 151-amino-acid chain: MVIVMKVAITSGAAEGPTKLNAFDNALLQAGIGDVNLIKVSSILPRNTRIVELPELEPGSIVNCVLSHMVSERRGDLISAAVAVATSSDFGCVVENSSVNRDPEDVRSEAISMVRYMMSVRGLEIKELIVEETNHVVEKCGAAVSAVVYLD.

S42 carries the post-translational modification Pyruvic acid (Ser).

Belongs to the PdaD family. The cofactor is pyruvate.

It catalyses the reaction L-arginine + H(+) = agmatine + CO2. The protein is Pyruvoyl-dependent arginine decarboxylase of Methanothermobacter thermautotrophicus (strain ATCC 29096 / DSM 1053 / JCM 10044 / NBRC 100330 / Delta H) (Methanobacterium thermoautotrophicum).